The sequence spans 396 residues: NADH-quinone oxidoreductase subunit D 1 (396 aa).

It belongs to the complex I 49 kDa subunit family. NDH-1 is composed of 14 different subunits. Subunits NuoB, C, D, E, F, and G constitute the peripheral sector of the complex.

The protein resides in the cell inner membrane. It carries out the reaction a quinone + NADH + 5 H(+)(in) = a quinol + NAD(+) + 4 H(+)(out). NDH-1 shuttles electrons from NADH, via FMN and iron-sulfur (Fe-S) centers, to quinones in the respiratory chain. The immediate electron acceptor for the enzyme in this species is believed to be ubiquinone. Couples the redox reaction to proton translocation (for every two electrons transferred, four hydrogen ions are translocated across the cytoplasmic membrane), and thus conserves the redox energy in a proton gradient. The protein is NADH-quinone oxidoreductase subunit D 1 of Rhizobium etli (strain ATCC 51251 / DSM 11541 / JCM 21823 / NBRC 15573 / CFN 42).